Consider the following 815-residue polypeptide: MPKHLLIVESPAKAKTINKYLGKDFTVLASYGHVRDLVPKEGAVDPENGFAMRYDLIDKNEKHVEAITKAAKTADSIYLATDPDREGEAISWHISEILKERGLLKDKPMQRIVFTEITPRAIKEAIQKPRMIASDLVDAQQARRALDYLVGFNLSPVLWRKVQRGLSAGRVQSPALRMIVEREEEIEAFITREYWSIHAECTHPAQHFSAKLIKLDGKKFEQFTITDSDTAAAAQRRIQQAAQGRLHITDVTNKERKRRPAPPFITSTLQQEASRKLGFTTRKTMQIAQKLYEGIALGEEGSVGLITYMRTDSVNLSLDALSEIRDIIARDYGTNALPDKPNVYTTKSKNAQEAHEAVRPTSALRTPTQVAPYLSNEEHRLYELVWKRTVASQMIPAILNTTSVDLAAGNEHVFRATGTTVVVQGFLAVYEEGKDNKNAEDDDEGRKLPVMKTGENVPLERILTEQHFTQPPPRYTEAALVKALEEYGIGRPSTYASIIQTLLFRKYVDMEGRSFRPTDIGRAVSKFLSSHFTQYVDYDFTAHLEDELDAISRGEEEWIPLMKKFWVPFKELVEDKKDSLDKTDAGSVRLLGIDPTSGKEVSARIGRFGPMVQIGTVDDEEKPRFASLRPNQSIYSISLEEAIELFKMPRVLGEDQSQQVSVGIGRFGPFAKRGSTYVSLKSEDDPYTIDLARATLLINEKEEIARNRIIKDFENSQIQVLNGRFGPYISDGKLNGKIPKDREPASLTLEEAQQLLINTGKPARKNFSTKKTATKNETRKQTTKKRTTDAKATKKVSDKPVKKQIKKRIAPNITQ.

One can recognise a Toprim domain in the interval 3–119; sequence KHLLIVESPA…QRIVFTEITP (117 aa). Mg(2+) is bound by residues E9 and D82. The Topo IA-type catalytic domain maps to 133–573; it reads ASDLVDAQQA…KFWVPFKELV (441 aa). The segment at 167-172 is interaction with DNA; sequence SAGRVQ. Y308 acts as the O-(5'-phospho-DNA)-tyrosine intermediate in catalysis. Positions 759-815 are disordered; it reads TGKPARKNFSTKKTATKNETRKQTTKKRTTDAKATKKVSDKPVKKQIKKRIAPNITQ. Over residues 774–801 the composition is skewed to basic and acidic residues; that stretch reads TKNETRKQTTKKRTTDAKATKKVSDKPV.

It belongs to the type IA topoisomerase family. Monomer. The cofactor is Mg(2+).

It carries out the reaction ATP-independent breakage of single-stranded DNA, followed by passage and rejoining.. Its function is as follows. Releases the supercoiling and torsional tension of DNA, which is introduced during the DNA replication and transcription, by transiently cleaving and rejoining one strand of the DNA duplex. Introduces a single-strand break via transesterification at a target site in duplex DNA. The scissile phosphodiester is attacked by the catalytic tyrosine of the enzyme, resulting in the formation of a DNA-(5'-phosphotyrosyl)-enzyme intermediate and the expulsion of a 3'-OH DNA strand. The free DNA strand then undergoes passage around the unbroken strand, thus removing DNA supercoils. Finally, in the religation step, the DNA 3'-OH attacks the covalent intermediate to expel the active-site tyrosine and restore the DNA phosphodiester backbone. The protein is DNA topoisomerase 1 of Xylella fastidiosa (strain Temecula1 / ATCC 700964).